A 549-amino-acid chain; its full sequence is Cation/acetate symporter ActP (549 aa).

Helical transmembrane passes span Trp-33–Ala-53, Leu-77–Phe-97, Gly-103–Glu-123, Ile-148–Gly-168, Ile-183–Ala-203, Trp-206–Val-226, Ile-262–Leu-282, Gly-303–Val-323, Leu-355–Leu-375, Val-404–Glu-424, Ile-428–Leu-448, Gly-464–Val-484, and Ile-493–Phe-513.

Belongs to the sodium:solute symporter (SSF) (TC 2.A.21) family.

It is found in the cell inner membrane. Its function is as follows. Transports acetate. The polypeptide is Cation/acetate symporter ActP (Salmonella paratyphi C (strain RKS4594)).